The sequence spans 144 residues: MRLNTLSPAEGSKKAGKRLGRGIGSGLGKTGGRGHKGQKSRSGGGVRRGFEGGQMPLYRRLPKFGFTSRKAMITAEIRLSDLAHVEGDVVDLNALKAANIIGVQIEFAKVILSGEVTRPVTVRGLRVTKGARAAIEAAGGKIEE.

Residues Met1 to Gln54 form a disordered region. Residues Arg21–Gly31 show a composition bias toward gly residues.

It belongs to the universal ribosomal protein uL15 family. In terms of assembly, part of the 50S ribosomal subunit.

Its function is as follows. Binds to the 23S rRNA. The polypeptide is Large ribosomal subunit protein uL15 (Klebsiella pneumoniae (strain 342)).